The primary structure comprises 194 residues: Peptide deformylase (194 aa).

The tract at residues 71–93 (DAEPEECGHDHGDGEGAHKHYPV) is disordered. Over residues 76-93 (ECGHDHGDGEGAHKHYPV) the composition is skewed to basic and acidic residues. The Fe cation site is built by Cys119 and His161. Glu162 is an active-site residue. His165 provides a ligand contact to Fe cation.

The protein belongs to the polypeptide deformylase family. It depends on Fe(2+) as a cofactor.

It carries out the reaction N-terminal N-formyl-L-methionyl-[peptide] + H2O = N-terminal L-methionyl-[peptide] + formate. Its function is as follows. Removes the formyl group from the N-terminal Met of newly synthesized proteins. Requires at least a dipeptide for an efficient rate of reaction. N-terminal L-methionine is a prerequisite for activity but the enzyme has broad specificity at other positions. This is Peptide deformylase from Erythrobacter litoralis (strain HTCC2594).